Consider the following 111-residue polypeptide: Phosphoribosyl-AMP cyclohydrolase (111 aa).

Asp80 contributes to the Mg(2+) binding site. Cys81 serves as a coordination point for Zn(2+). Residues Asp82 and Asp84 each coordinate Mg(2+). Zn(2+)-binding residues include Cys97 and Cys104.

This sequence belongs to the PRA-CH family. In terms of assembly, homodimer. The cofactor is Mg(2+). Zn(2+) serves as cofactor.

It is found in the cytoplasm. The catalysed reaction is 1-(5-phospho-beta-D-ribosyl)-5'-AMP + H2O = 1-(5-phospho-beta-D-ribosyl)-5-[(5-phospho-beta-D-ribosylamino)methylideneamino]imidazole-4-carboxamide. Its pathway is amino-acid biosynthesis; L-histidine biosynthesis; L-histidine from 5-phospho-alpha-D-ribose 1-diphosphate: step 3/9. Functionally, catalyzes the hydrolysis of the adenine ring of phosphoribosyl-AMP. In Mycobacterium marinum (strain ATCC BAA-535 / M), this protein is Phosphoribosyl-AMP cyclohydrolase.